Reading from the N-terminus, the 288-residue chain is Probable ketoamine kinase VC_1539 (288 aa).

An ATP-binding site is contributed by 92–94 (NYL). Asp195 serves as the catalytic Proton acceptor.

This sequence belongs to the fructosamine kinase family.

Ketoamine kinase that phosphorylates ketoamines on the third carbon of the sugar moiety to generate ketoamine 3-phosphate. In Vibrio cholerae serotype O1 (strain ATCC 39315 / El Tor Inaba N16961), this protein is Probable ketoamine kinase VC_1539.